We begin with the raw amino-acid sequence, 380 residues long: Peroxisomal membrane protein PEX13 (380 aa).

Residues 1–30 (MSDSSAPDLPSKPSSLNAGQSSSLQTTNTG) are disordered. Residues 1–230 (MSDSSAPDLP…NKNTNKLSLK (230 aa)) are Lumenal-facing. Over residues 12–30 (KPSSLNAGQSSSLQTTNTG) the composition is skewed to polar residues. The helical transmembrane segment at 231 to 251 (PLLLFLAAVVGFPYLLKKLIA) threads the bilayer. Over 252–380 (HLAETSQMNG…DSTEFQKMKT (129 aa)) the chain is Cytoplasmic. An SH3 domain is found at 277–344 (TKLEFARALY…PYNYVEIIER (68 aa)).

This sequence belongs to the peroxin-13 family. In terms of assembly, interacts (via SH3 domain) with PEX14 (via SH3-binding motif); forming the PEX13-PEX14 docking complex.

It is found in the peroxisome membrane. Its function is as follows. Component of the PEX13-PEX14 docking complex, a translocon channel that specifically mediates the import of peroxisomal cargo proteins bound to PEX5 receptor. The PEX13-PEX14 docking complex forms a large import pore which can be opened to a diameter of about 9 nm. Mechanistically, PEX5 receptor along with cargo proteins associates with the PEX14 subunit of the PEX13-PEX14 docking complex in the cytosol, leading to the insertion of the receptor into the organelle membrane with the concomitant translocation of the cargo into the peroxisome matrix. This is Peroxisomal membrane protein PEX13 (PEX13) from Komagataella pastoris (Yeast).